A 651-amino-acid polypeptide reads, in one-letter code: Receptor-like serine/threonine-protein kinase At4g25390 (651 aa).

Positions 1–25 are cleaved as a signal peptide; it reads MPSRSISAPVPVLAPAPIVSSLVPA. The Extracellular segment spans residues 26-40; sequence APSGHQNKTTRIFPP. Residue Asn32 is glycosylated (N-linked (GlcNAc...) asparagine). A helical transmembrane segment spans residues 41 to 61; it reads FVVAGAGAGFSLFITLSVCFC. Residues 62–651 lie on the Cytoplasmic side of the membrane; the sequence is KFSRKRSSPP…PLKTTRKQRR (590 aa). Residues 66–87 form a disordered region; sequence KRSSPPAENASSSPRRPSPREF. A compositionally biased stretch (low complexity) spans 69-87; it reads SPPAENASSSPRRPSPREF. A Protein kinase domain is found at 99–633; the sequence is FSQANRLGQG…LKGEVNLPEL (535 aa). Residues 105 to 113 and Lys127 each bind ATP; that span reads LGQGGFGVV. The active-site Proton acceptor is the Asp225.

The protein belongs to the protein kinase superfamily. Ser/Thr protein kinase family.

The protein resides in the cell membrane. It carries out the reaction L-seryl-[protein] + ATP = O-phospho-L-seryl-[protein] + ADP + H(+). The catalysed reaction is L-threonyl-[protein] + ATP = O-phospho-L-threonyl-[protein] + ADP + H(+). The polypeptide is Receptor-like serine/threonine-protein kinase At4g25390 (Arabidopsis thaliana (Mouse-ear cress)).